Here is an 83-residue protein sequence, read N- to C-terminus: Evasin P1090 (83 aa).

Residues M1–A24 form the signal peptide. Intrachain disulfides connect C44–C63, C48–C65, and C59–C76. N47 carries an N-linked (GlcNAc...) asparagine glycan. N-linked (GlcNAc...) asparagine glycosylation occurs at N70.

The protein resides in the secreted. Salivary chemokine-binding protein which binds to host chemokines CXCL1, CXCL2, CXCL3, CXCL5, CXCL6, CXCL10, CXCL11 and CXCL13. The chain is Evasin P1090 from Ixodes ricinus (Common tick).